Consider the following 149-residue polypeptide: MRAVVQRVISSKVEVDGKVIGSIGKGLNVLLGISKEDTEEDIKYLKEKIINLRIFEDENEKLNKSLLDIGGDIIIVSQFTLYGDCRKGRRPSFIEALGGEEAYILYNKFIESIKKEVNNVATGEFGADMKVYIENDGPVTILLDSKKTF.

Residues 137–138 (GP) carry the Gly-cisPro motif, important for rejection of L-amino acids motif.

Belongs to the DTD family. As to quaternary structure, homodimer.

The protein resides in the cytoplasm. It carries out the reaction glycyl-tRNA(Ala) + H2O = tRNA(Ala) + glycine + H(+). The enzyme catalyses a D-aminoacyl-tRNA + H2O = a tRNA + a D-alpha-amino acid + H(+). Its function is as follows. An aminoacyl-tRNA editing enzyme that deacylates mischarged D-aminoacyl-tRNAs. Also deacylates mischarged glycyl-tRNA(Ala), protecting cells against glycine mischarging by AlaRS. Acts via tRNA-based rather than protein-based catalysis; rejects L-amino acids rather than detecting D-amino acids in the active site. By recycling D-aminoacyl-tRNA to D-amino acids and free tRNA molecules, this enzyme counteracts the toxicity associated with the formation of D-aminoacyl-tRNA entities in vivo and helps enforce protein L-homochirality. This is D-aminoacyl-tRNA deacylase from Clostridium botulinum (strain Loch Maree / Type A3).